Here is a 171-residue protein sequence, read N- to C-terminus: MDYFTLFGLPARYQLDTQALSLRFQDLQRQYHPDKFASGSQAEQLAAVQQSATINQAWQTLRHPLMRAEYLLSLHGFDLASEQHTVRDTAFLMEQLELREELDEIEQAKDEARLESFIKRVKKMFDTRHQLMVEQLDNETWDAAADTVRKLRFLDKLRSSAEQLEEKLLDF.

The J domain maps to D2 to L74.

It belongs to the HscB family. Interacts with HscA and stimulates its ATPase activity. Interacts with IscU.

In terms of biological role, co-chaperone involved in the maturation of iron-sulfur cluster-containing proteins. Seems to help targeting proteins to be folded toward HscA. The chain is Co-chaperone protein HscB from Shigella boydii serotype 18 (strain CDC 3083-94 / BS512).